The primary structure comprises 429 residues: Acetyltransferase pyr8 (429 aa).

The next 9 membrane-spanning stretches (helical) occupy residues 12 to 32 (IAQE…VIIT), 39 to 56 (LRLA…RFSL), 69 to 89 (GVAA…LLIT), 154 to 174 (YVLR…LIHM), 221 to 241 (VCLN…RISA), 300 to 320 (IFFT…ILGI), 324 to 344 (GSGA…EDGV), 365 to 385 (LVGF…YLYP), and 409 to 429 (VAQK…GGEI).

It belongs to the wax synthase family.

Its subcellular location is the membrane. Its pathway is secondary metabolite biosynthesis; terpenoid biosynthesis. Acetyltransferase; part of the gene cluster that mediates the biosynthesis of pyripyropene A, a specific human acyl-coenzyme A:cholesterol acyltransferase 2 inhibitor. The first step of the pathway is the synthesis of nicotinyl-CoA from nicotinic acid by the nicotinic acid-CoA ligase pyr1. Nicotinyl-CoA is then a substrate of polyketide synthase pyr2 to produce 4-hydroxy-6-(3-pyridinyl)-2H-pyran-2-one (HPPO) which is further prenylated by the polyprenyl transferase pyr6 to yield farnesyl-HPPO. The next steps consist of an epoxidation of farnesyl-HPPO to epoxyfarnesyl-HPPO by FAD-dependent monooxygenase pyr5 and a cyclization of the terpenoid portion by the terpene cyclase pyr4 to yield deacetyl-pyripyropene E. The 2 cytochrome P450 monooxygenases pyr3 and pyr9, and the 2 acetyltransferases pyr7 and pyr8 are involved in the conversion of deacetyl-pyripyropene E into pyripyropene A through several cycles of oxidation and acetylation steps. Pyr7 acetylates deacetyl-pyripyropene E to pyripyropene E which is oxidized to 11-deacetyl-pyripyropene O by pyr3, which is in turn acetylated into pyripyropene O by pyr8. Pyripyropene O is then oxidized to deacetyl-pyripyropene A by pyr9. Deacetyl-pyripyropene A is finally acetylated to pyripyropene A by pyr8. This Aspergillus fumigatus (strain ATCC MYA-4609 / CBS 101355 / FGSC A1100 / Af293) (Neosartorya fumigata) protein is Acetyltransferase pyr8.